Consider the following 560-residue polypeptide: Putative transport protein VIBHAR_02636 (560 aa).

Helical transmembrane passes span 8 to 28 (LLEQNPILLIFVVLAIGLAFG), 37 to 57 (LGNSIGVLITSLVMGHLGFSF), 66 to 86 (FMLFIYCVGIEAGPNFFGIFF), 91 to 111 (HYFILSMTVLVSAVGLTYFCS), and 164 to 184 (VGYAMAYLVGLISMIMFAKLL). RCK C-terminal domains are found at residues 205 to 292 (LGNS…FRNG) and 293 to 376 (KEVF…KIGF). A run of 6 helical transmembrane segments spans residues 386–406 (LLAFCSFFILGIMFGLVTMTF), 409–429 (VSFSLGNAVGLLLSGITLGFL), 450–470 (LGLMFFMVGIGLSAGGKIFEH), 478–498 (IIGLAFIVSVVPVVLAYLVGA), 505–525 (SALLFGAIIGARTCAPAMDVV), and 539–559 (AGTYAIANILMTLAGTILIIL).

It belongs to the AAE transporter (TC 2.A.81) family. YbjL subfamily.

Its subcellular location is the cell membrane. This chain is Putative transport protein VIBHAR_02636, found in Vibrio campbellii (strain ATCC BAA-1116).